We begin with the raw amino-acid sequence, 112 residues long: Ig kappa chain V-II region 2S1.3 (112 aa).

Residues 1 to 23 (DIVMTQAAFSNPVTLGTSASFSC) form a framework-1 region. A disulfide bridge connects residues Cys23 and Cys93. The segment at 24–39 (RSSKSLQQSKGITYLY) is complementarity-determining-1. The segment at 40-54 (WYLQKPGQSPQLLIY) is framework-2. The interval 55–61 (QMSNLAS) is complementarity-determining-2. A framework-3 region spans residues 62–93 (GVPDRFSGSGSGTDFTLRISRVEAEDVGVYYC). Residues 94 to 102 (ANLQELPYT) form a complementarity-determining-3 region. The framework-4 stretch occupies residues 103–112 (FGGGTKLEIK).

In Mus musculus (Mouse), this protein is Ig kappa chain V-II region 2S1.3.